Here is a 220-residue protein sequence, read N- to C-terminus: Thiamine-phosphate synthase (220 aa).

4-amino-2-methyl-5-(diphosphooxymethyl)pyrimidine-binding positions include 47 to 51 (QYREK) and Asn-78. Positions 79 and 98 each coordinate Mg(2+). Ser-117 contributes to the 4-amino-2-methyl-5-(diphosphooxymethyl)pyrimidine binding site. 2-[(2R,5Z)-2-carboxy-4-methylthiazol-5(2H)-ylidene]ethyl phosphate is bound at residue 143-145 (TAT). Lys-146 is a 4-amino-2-methyl-5-(diphosphooxymethyl)pyrimidine binding site. Residues Gly-174 and 194-195 (IS) each bind 2-[(2R,5Z)-2-carboxy-4-methylthiazol-5(2H)-ylidene]ethyl phosphate.

The protein belongs to the thiamine-phosphate synthase family. Requires Mg(2+) as cofactor.

The enzyme catalyses 2-[(2R,5Z)-2-carboxy-4-methylthiazol-5(2H)-ylidene]ethyl phosphate + 4-amino-2-methyl-5-(diphosphooxymethyl)pyrimidine + 2 H(+) = thiamine phosphate + CO2 + diphosphate. The catalysed reaction is 2-(2-carboxy-4-methylthiazol-5-yl)ethyl phosphate + 4-amino-2-methyl-5-(diphosphooxymethyl)pyrimidine + 2 H(+) = thiamine phosphate + CO2 + diphosphate. It carries out the reaction 4-methyl-5-(2-phosphooxyethyl)-thiazole + 4-amino-2-methyl-5-(diphosphooxymethyl)pyrimidine + H(+) = thiamine phosphate + diphosphate. Its pathway is cofactor biosynthesis; thiamine diphosphate biosynthesis; thiamine phosphate from 4-amino-2-methyl-5-diphosphomethylpyrimidine and 4-methyl-5-(2-phosphoethyl)-thiazole: step 1/1. Its function is as follows. Condenses 4-methyl-5-(beta-hydroxyethyl)thiazole monophosphate (THZ-P) and 2-methyl-4-amino-5-hydroxymethyl pyrimidine pyrophosphate (HMP-PP) to form thiamine monophosphate (TMP). This Methanosarcina barkeri (strain Fusaro / DSM 804) protein is Thiamine-phosphate synthase.